A 109-amino-acid chain; its full sequence is Mitochondrial import inner membrane translocase subunit TIM12 (109 aa).

Serine 2 is modified (N-acetylserine). Residues cysteine 40–cysteine 66 carry the Twin CX3C motif motif. 2 cysteine pairs are disulfide-bonded: cysteine 40-cysteine 66 and cysteine 44-cysteine 62.

This sequence belongs to the small Tim family. As to quaternary structure, component of the TIM22 complex, whose core is composed of TIM18, TIM22 and TIM54, associated with the peripheral proteins MRS5/TIM12 and the 70 kDa heterohexamer composed of TIM9 and TIM10 (or TIM8 and TIM13). Interacts directly with both the TIM22 protein and the TIM9-TIM10 heterohexamer. Interacts with multi-pass transmembrane proteins in transit.

The protein localises to the mitochondrion inner membrane. The protein resides in the mitochondrion intermembrane space. In terms of biological role, essential component of the TIM22 complex, a complex that mediates the import and insertion of multi-pass transmembrane proteins into the mitochondrial inner membrane. The TIM22 complex forms a twin-pore translocase that uses the membrane potential as external driving force. In the TIM22 complex, it acts as a docking point for the soluble TIM9-TIM10 heterohexamer that guides the target proteins in transit through the aqueous mitochondrial intermembrane space. This is Mitochondrial import inner membrane translocase subunit TIM12 (TIM12) from Saccharomyces cerevisiae (strain ATCC 204508 / S288c) (Baker's yeast).